Reading from the N-terminus, the 808-residue chain is Probable E3 ubiquitin-protein ligase MARCHF10 (808 aa).

Disordered stretches follow at residues 33–81 (LRRQ…LTEP), 101–268 (QTSV…RKAS), and 284–415 (SRRE…EVGV). Positions 34-49 (RRQEYRRDPNEKKRDQ) are enriched in basic and acidic residues. Polar residues predominate over residues 237–249 (QAFQGKNSPQVLS). Composition is skewed to basic and acidic residues over residues 330–349 (KNFEENAENCRGHSSRRSEP) and 379–397 (LPDRESATEKDRGGSENAK). Residues 651–721 (DSEEEGDLCR…EMCKQGLLVD (71 aa)) form an RING-CH-type zinc finger. Zn(2+) contacts are provided by Cys-659, Cys-662, Cys-677, Cys-679, His-687, Cys-690, Cys-711, and Cys-714. The segment at 773–808 (ERERLSRNYPQPRTEENENSELGDGNEGSISQSQVV) is disordered.

It carries out the reaction S-ubiquitinyl-[E2 ubiquitin-conjugating enzyme]-L-cysteine + [acceptor protein]-L-lysine = [E2 ubiquitin-conjugating enzyme]-L-cysteine + N(6)-ubiquitinyl-[acceptor protein]-L-lysine.. Its pathway is protein modification; protein ubiquitination. Functionally, E3 ubiquitin-protein ligase. E3 ubiquitin ligases accept ubiquitin from an E2 ubiquitin-conjugating enzyme in the form of a thioester and then directly transfer the ubiquitin to targeted substrates. In Homo sapiens (Human), this protein is Probable E3 ubiquitin-protein ligase MARCHF10.